A 977-amino-acid chain; its full sequence is Disks large-associated protein 1 (977 aa).

Disordered stretches follow at residues 150–203 (TKSH…GWWS) and 349–371 (KAMG…KVAA). Phosphoserine occurs at positions 169, 356, 359, 362, 366, 383, 412, 415, 419, 422, 431, 503, 510, and 562. Phosphothreonine is present on Thr-563. Ser-565 and Ser-589 each carry phosphoserine. Phosphothreonine is present on Thr-590. A phosphoserine mark is found at Ser-592 and Ser-595. Interaction with DYL2 stretches follow at residues 650-661 (LSIGIQVDDAEE) and 672-683 (SKFQSVGVQVEE). Positions 899–965 (WKQMDPLDKK…QNSATESAES (67 aa)) are disordered. Composition is skewed to basic and acidic residues over residues 903-912 (DPLDKKERRA) and 928-943 (IRER…EARK). Phosphoserine is present on Ser-932. The segment covering 954-963 (VRQNSATESA) has biased composition (polar residues). The PDZ-binding motif lies at 975 to 977 (TRL).

Belongs to the SAPAP family. In terms of assembly, interacts with guanylate kinase-like domain of DLG1, DLG2, DLG3, DLG4 and AIP1. Interacts with the PDZ domain of SHANK1, SHANK2 and SHANK3. Found in a complex with DLG4 and SHANK1, SHANK2 or SHANK3. Found in a complex with DLG4 and BEGAIN. Interacts with DYL2 and LRFN1. Interacts with MPP2 (via the SH3-Guanylate kinase-like sub-module). In terms of processing, ubiquitinated by TRIM3; leading to proteasomal degradation. Expressed in brain.

The protein localises to the cell membrane. It is found in the postsynaptic density. It localises to the synapse. Functionally, part of the postsynaptic scaffold in neuronal cells. The chain is Disks large-associated protein 1 (DLGAP1) from Homo sapiens (Human).